We begin with the raw amino-acid sequence, 244 residues long: uncharacterized protein (244 aa).

This is an uncharacterized protein from Sulfolobus spindle-shape virus 1 (SSV1).